The primary structure comprises 426 residues: Serine--tRNA ligase (426 aa).

Over residues 1–15 (MIDVKDLSENPDKFR) the composition is skewed to basic and acidic residues. Residues 1-22 (MIDVKDLSENPDKFRASQRARG) are disordered. 228 to 230 (TSE) serves as a coordination point for L-serine. ATP is bound by residues 259 to 261 (RRE) and V275. E282 is a binding site for L-serine. ATP is bound at residue 346–349 (ELTS). An L-serine-binding site is contributed by T386.

This sequence belongs to the class-II aminoacyl-tRNA synthetase family. Type-1 seryl-tRNA synthetase subfamily. Homodimer. The tRNA molecule binds across the dimer.

Its subcellular location is the cytoplasm. The catalysed reaction is tRNA(Ser) + L-serine + ATP = L-seryl-tRNA(Ser) + AMP + diphosphate + H(+). It carries out the reaction tRNA(Sec) + L-serine + ATP = L-seryl-tRNA(Sec) + AMP + diphosphate + H(+). Its pathway is aminoacyl-tRNA biosynthesis; selenocysteinyl-tRNA(Sec) biosynthesis; L-seryl-tRNA(Sec) from L-serine and tRNA(Sec): step 1/1. Catalyzes the attachment of serine to tRNA(Ser). Is also able to aminoacylate tRNA(Sec) with serine, to form the misacylated tRNA L-seryl-tRNA(Sec), which will be further converted into selenocysteinyl-tRNA(Sec). This is Serine--tRNA ligase from Pseudarthrobacter chlorophenolicus (strain ATCC 700700 / DSM 12829 / CIP 107037 / JCM 12360 / KCTC 9906 / NCIMB 13794 / A6) (Arthrobacter chlorophenolicus).